A 460-amino-acid chain; its full sequence is Protein btn1 (460 aa).

11 helical membrane-spanning segments follow: residues 42–62 (VCVA…VILS), 76–96 (VVLL…PYFI), 105–125 (IIIF…SPPY), 135–155 (LAGI…FVGL), 164–184 (LAAW…AYAL), 195–215 (ATLL…FMVL), 287–307 (GLFF…YTIN), 323–343 (FAHF…GVFI), 356–376 (LYLP…QAVF), 378–398 (FIPS…LGGL), and 428–448 (AAGI…LCDW).

This sequence belongs to the battenin family.

The protein resides in the vacuole membrane. Its function is as follows. Involved in vacuolar transport and vacuole pH homeostasis. Also required for cytokinesis. This Aspergillus fumigatus (strain ATCC MYA-4609 / CBS 101355 / FGSC A1100 / Af293) (Neosartorya fumigata) protein is Protein btn1 (btn1).